Reading from the N-terminus, the 459-residue chain is ATP-dependent protease ATPase subunit HslU (459 aa).

ATP is bound by residues V26, 68-73 (GVGKTE), D271, E337, and R409.

The protein belongs to the ClpX chaperone family. HslU subfamily. As to quaternary structure, a double ring-shaped homohexamer of HslV is capped on each side by a ring-shaped HslU homohexamer. The assembly of the HslU/HslV complex is dependent on binding of ATP.

Its subcellular location is the cytoplasm. ATPase subunit of a proteasome-like degradation complex; this subunit has chaperone activity. The binding of ATP and its subsequent hydrolysis by HslU are essential for unfolding of protein substrates subsequently hydrolyzed by HslV. HslU recognizes the N-terminal part of its protein substrates and unfolds these before they are guided to HslV for hydrolysis. The sequence is that of ATP-dependent protease ATPase subunit HslU from Xylella fastidiosa (strain M12).